We begin with the raw amino-acid sequence, 291 residues long: MADDKKQLLIVTGMSGAGKTVVAHDLEDMGYFVVDNLPPTLLGSFWDYNSNDFHKVAVVIDLRVKTFYTDLLDEVNSLEDNGNVQATILFLDASDDVLVARYKETRRLPPLANNGKGRLLDGIQEERRILMPIKNRSNYIINTSNLSTKDLKQKLINTFSDRKRQPFSIEVMSFGFKYGMPIDADIVMDVRFLPNPFYIPELRPFTGLDKRVFDYVMNKKETQVFYQKLLDLLETAIPGYIKEGKEKLTIAIGCTGGQHRSVSIAQQLARDLSKKYPVDITHREVSRYIRK.

13-20 provides a ligand contact to ATP; it reads GMSGAGKT. Residue 61 to 64 participates in GTP binding; that stretch reads DLRV.

Belongs to the RapZ-like family.

Displays ATPase and GTPase activities. The sequence is that of Nucleotide-binding protein lhv_0732 from Lactobacillus helveticus (strain DPC 4571).